The sequence spans 64 residues: Disintegrin VA6 (64 aa).

One can recognise a Disintegrin domain in the interval 1-64; sequence NSANPCCDPV…SDCPRNPYKS (64 aa). 4 cysteine pairs are disulfide-bonded: cysteine 6-cysteine 29, cysteine 20-cysteine 26, cysteine 25-cysteine 50, and cysteine 38-cysteine 57. The Cell attachment site signature appears at 42-44; the sequence is RGD.

It belongs to the venom metalloproteinase (M12B) family. P-II subfamily. P-IId sub-subfamily. As to quaternary structure, homodimer; disulfide-linked. In terms of tissue distribution, expressed by the venom gland.

It localises to the secreted. Its function is as follows. Poor inhibitor of platelet aggregation. The disintegrin inhibits the adhesion of cells expressing the RGD-dependent integrin alpha-5/beta-1 (ITGA5/ITGB1) to immobilized fibronectin. Inhibition on alpha-IIb/beta-3 (ITGA2B/ITGB3) is low, and there is no inhibition on alpha-1/beta-1 (ITGA1/ITGB1), alpha-2/beta-1 (ITGA2/ITGB1) and alpha-6/beta-1 (ITGA6/ITGB1). The protein is Disintegrin VA6 of Vipera ammodytes ammodytes (Western sand viper).